Reading from the N-terminus, the 230-residue chain is Thymine/uracil-DNA glycosylase (230 aa).

Cys204, Cys211, Cys214, and Cys221 together coordinate [4Fe-4S] cluster.

Belongs to the Nth/MutY family. [4Fe-4S] cluster serves as cofactor.

It carries out the reaction Hydrolyzes mismatched double-stranded DNA and polynucleotides, releasing free thymine.. DNA glycosylase that excises thymine from T/G mismatches and uracil from U/G mismatches. Can also process T/GO and U/GO, but not A/G, T/C and U/C. Has weak AP lyase activity. The protein is Thymine/uracil-DNA glycosylase of Pyrobaculum aerophilum (strain ATCC 51768 / DSM 7523 / JCM 9630 / CIP 104966 / NBRC 100827 / IM2).